Here is a 439-residue protein sequence, read N- to C-terminus: tRNA-2-methylthio-N(6)-dimethylallyladenosine synthase (439 aa).

The MTTase N-terminal domain occupies 2-119 (KYIYIKTWGC…LPKMIDEVEK (118 aa)). The [4Fe-4S] cluster site is built by C11, C48, C82, C156, C160, and C163. One can recognise a Radical SAM core domain in the interval 142–374 (KKKGYTADIS…QERINIQTML (233 aa)). The TRAM domain occupies 377-439 (RKMFGSIQSV…HTHSLKGELF (63 aa)).

It belongs to the methylthiotransferase family. MiaB subfamily. In terms of assembly, monomer. [4Fe-4S] cluster is required as a cofactor.

It is found in the cytoplasm. The enzyme catalyses N(6)-dimethylallyladenosine(37) in tRNA + (sulfur carrier)-SH + AH2 + 2 S-adenosyl-L-methionine = 2-methylsulfanyl-N(6)-dimethylallyladenosine(37) in tRNA + (sulfur carrier)-H + 5'-deoxyadenosine + L-methionine + A + S-adenosyl-L-homocysteine + 2 H(+). Functionally, catalyzes the methylthiolation of N6-(dimethylallyl)adenosine (i(6)A), leading to the formation of 2-methylthio-N6-(dimethylallyl)adenosine (ms(2)i(6)A) at position 37 in tRNAs that read codons beginning with uridine. In Buchnera aphidicola subsp. Acyrthosiphon pisum (strain APS) (Acyrthosiphon pisum symbiotic bacterium), this protein is tRNA-2-methylthio-N(6)-dimethylallyladenosine synthase.